A 43-amino-acid polypeptide reads, in one-letter code: Delta/kappa-actitoxin-Avd4a (43 aa).

3 disulfides stabilise this stretch: C4–C39, C6–C32, and C22–C40.

It belongs to the sea anemone type 3 (BDS) potassium channel toxin family.

Its subcellular location is the secreted. It localises to the nematocyst. In terms of biological role, acts as a gating modifier on both Kv and Nav ion channels, and also acts on blood pressure. Voltage-dependently inhibits voltage-gated potassium channels Kv3 (Kv3.1/KCNC1, Kv3.2/KCNC2 and Kv3.4/KCNC4) and slows inactivation of the voltage-gated sodium channel Nav1.7/SCN9A. Inhibits all Kv3.1, Kv3.2 and Kv3.4 by about 50% when tested at a voltage of +40 mV (45%, 48% and 56%, respectively). May act by binding residues in voltage-sensing domains S3b and S4 of Kv3. On sodium channel, tests have been done on human Nav1.7/SCN9A (expressed in HEK293 cells) (EC(50)=3 nM) and rat SCG neurons that mostly carry Nav1.7 channels (EC(50)=300 nM). This toxin also reduces blood pressure. This Anemonia sulcata (Mediterranean snakelocks sea anemone) protein is Delta/kappa-actitoxin-Avd4a.